We begin with the raw amino-acid sequence, 205 residues long: ATP-dependent Clp protease proteolytic subunit (205 aa).

The active-site Nucleophile is the Ser108. The active site involves His133.

Belongs to the peptidase S14 family. As to quaternary structure, fourteen ClpP subunits assemble into 2 heptameric rings which stack back to back to give a disk-like structure with a central cavity, resembling the structure of eukaryotic proteasomes.

Its subcellular location is the cytoplasm. The enzyme catalyses Hydrolysis of proteins to small peptides in the presence of ATP and magnesium. alpha-casein is the usual test substrate. In the absence of ATP, only oligopeptides shorter than five residues are hydrolyzed (such as succinyl-Leu-Tyr-|-NHMec, and Leu-Tyr-Leu-|-Tyr-Trp, in which cleavage of the -Tyr-|-Leu- and -Tyr-|-Trp bonds also occurs).. Functionally, cleaves peptides in various proteins in a process that requires ATP hydrolysis. Has a chymotrypsin-like activity. Plays a major role in the degradation of misfolded proteins. This chain is ATP-dependent Clp protease proteolytic subunit, found in Alcanivorax borkumensis (strain ATCC 700651 / DSM 11573 / NCIMB 13689 / SK2).